The following is a 308-amino-acid chain: Testis-specific Y-encoded protein 1 (308 aa).

This sequence belongs to the nucleosome assembly protein (NAP) family. Post-translationally, phosphorylated. In terms of tissue distribution, specifically expressed in testicular tissues. Isoform 1 and isoform 2 are expressed in spermatogonia and spermatocytes. Found in early testicular carcinoma in situ, spermatogonial cells in testicular tissues of 46,X,Y female and in prostate cancer cell lines.

The protein localises to the cytoplasm. It localises to the nucleus. May be involved in sperm differentiation and proliferation. The sequence is that of Testis-specific Y-encoded protein 1 (TSPY1) from Homo sapiens (Human).